The chain runs to 340 residues: Phenylalanine--tRNA ligase alpha subunit (340 aa).

Residue glutamate 255 coordinates Mg(2+).

Belongs to the class-II aminoacyl-tRNA synthetase family. Phe-tRNA synthetase alpha subunit type 1 subfamily. In terms of assembly, tetramer of two alpha and two beta subunits. The cofactor is Mg(2+).

It localises to the cytoplasm. It carries out the reaction tRNA(Phe) + L-phenylalanine + ATP = L-phenylalanyl-tRNA(Phe) + AMP + diphosphate + H(+). In Heliobacterium modesticaldum (strain ATCC 51547 / Ice1), this protein is Phenylalanine--tRNA ligase alpha subunit.